The sequence spans 371 residues: Methionine import ATP-binding protein MetN (371 aa).

An ABC transporter domain is found at 29–270; sequence IRIEGVRKVY…PRHEVTRRFV (242 aa). 67–74 is an ATP binding site; that stretch reads GRSGAGKS.

This sequence belongs to the ABC transporter superfamily. Methionine importer (TC 3.A.1.24) family. In terms of assembly, the complex is composed of two ATP-binding proteins (MetN), two transmembrane proteins (MetI) and a solute-binding protein (MetQ).

It is found in the cell inner membrane. It carries out the reaction L-methionine(out) + ATP + H2O = L-methionine(in) + ADP + phosphate + H(+). The catalysed reaction is D-methionine(out) + ATP + H2O = D-methionine(in) + ADP + phosphate + H(+). Part of the ABC transporter complex MetNIQ involved in methionine import. Responsible for energy coupling to the transport system. This chain is Methionine import ATP-binding protein MetN, found in Rhodopseudomonas palustris (strain BisA53).